The chain runs to 674 residues: Slender lobes-like protein (674 aa).

Disordered stretches follow at residues 65–137, 168–321, and 352–382; these read LEKS…NASK, NELN…TIKK, and QKSRRQSLHVPSPELAAKNPKLRRRSERVEV. The segment covering 73-97 has biased composition (basic residues); sequence PKKKVQTKKHLPPVRKKDSVKRRRI. Polar residues predominate over residues 127-137; the sequence is NQSNCSSNASK. The span at 216–228 shows a compositional bias: acidic residues; the sequence is VDSDDEEEQDQDQ. Basic and acidic residues predominate over residues 233–245; the sequence is KPAESENHSEIKK. Position 248 is a phosphoserine (Ser248). Positions 272–312 are enriched in basic and acidic residues; it reads EDPKEAGKNEESDKDKPAENGKSDKDKQAETEMSDEDKPSE. A phosphoserine mark is found at Ser358 and Ser391. 2 disordered regions span residues 395–585 and 618–659; these read MVAE…AGYV and KYFR…NSAK. Basic residues predominate over residues 400–410; it reads KRQKNKRKRLS. At Ser414 the chain carries Phosphoserine. The span at 548-558 shows a compositional bias: basic residues; the sequence is AKQKKKGKKKQ.

The chain is Slender lobes-like protein from Drosophila melanogaster (Fruit fly).